The primary structure comprises 597 residues: U3 small nucleolar RNA-associated protein 6 homolog (597 aa).

HAT repeat units lie at residues 121–153 (ATKTRLSKVFSAMLAIHSNKPALWIMAAKWEME), 156–188 (LSSESARQLFLRALRFHPECPKLYKEYFRMELM), 304–335 (RKEERCCAVYEEAVKTLPTEAMWKCYITFCLE), 488–520 (GGYKKARAVFKSLQESRPFSVDFFRKMIQFEKE), and 524–557 (CNMANIREYYERALREFGSADSDLWMDYMKEELN).

Belongs to the UTP6 family. Part of the small subunit (SSU) processome, composed of more than 70 proteins and the RNA chaperone small nucleolar RNA (snoRNA) U3.

It localises to the nucleus. Its subcellular location is the nucleolus. Part of the small subunit (SSU) processome, first precursor of the small eukaryotic ribosomal subunit. During the assembly of the SSU processome in the nucleolus, many ribosome biogenesis factors, an RNA chaperone and ribosomal proteins associate with the nascent pre-rRNA and work in concert to generate RNA folding, modifications, rearrangements and cleavage as well as targeted degradation of pre-ribosomal RNA by the RNA exosome. Involved in nucleolar processing of pre-18S ribosomal RNA. This is U3 small nucleolar RNA-associated protein 6 homolog from Homo sapiens (Human).